The primary structure comprises 234 residues: UPF0758 protein Smal_0281 (234 aa).

The region spanning 103–225 (VGNNPAAVGR…PVSFAERGLL (123 aa)) is the MPN domain. Zn(2+) is bound by residues H174, H176, and D187. The JAMM motif signature appears at 174 to 187 (HNHPSGDPEPSSAD).

The protein belongs to the UPF0758 family.

This chain is UPF0758 protein Smal_0281, found in Stenotrophomonas maltophilia (strain R551-3).